Consider the following 641-residue polypeptide: SH2 domain-containing protein A (641 aa).

A disordered region spans residues 355–384 (VNGNGTSMEWRPQNHEEDNSSTDSENTEMR). In terms of domain architecture, SH2 spans 547–641 (WIEGFVTKEE…SRLGRIIRGI (95 aa)).

Post-translationally, phosphorylated on tyrosine residues. As to expression, expressed in roots, leaves, stems and flowers.

The sequence is that of SH2 domain-containing protein A from Arabidopsis thaliana (Mouse-ear cress).